We begin with the raw amino-acid sequence, 430 residues long: Adenylosuccinate synthetase (430 aa).

GTP contacts are provided by residues 12 to 18 (GDEGKGK) and 40 to 42 (GHT). The active-site Proton acceptor is Asp-13. Mg(2+) is bound by residues Asp-13 and Gly-40. IMP is bound by residues 13-16 (DEGK), 38-41 (NAGH), Thr-130, Arg-144, Gln-224, and Thr-239. The active-site Proton donor is His-41. The tract at residues 277–297 (PFPTEQDNETGRKIGERGREF) is disordered. Basic and acidic residues predominate over residues 285-296 (ETGRKIGERGRE). 299–305 (TNTGRPR) contributes to the substrate binding site. Arg-303 is an IMP binding site. GTP-binding positions include Arg-305, 331–333 (KLD), and 413–415 (STS).

It belongs to the adenylosuccinate synthetase family. Homodimer. Mg(2+) serves as cofactor.

The protein localises to the cytoplasm. It catalyses the reaction IMP + L-aspartate + GTP = N(6)-(1,2-dicarboxyethyl)-AMP + GDP + phosphate + 2 H(+). The protein operates within purine metabolism; AMP biosynthesis via de novo pathway; AMP from IMP: step 1/2. Its function is as follows. Plays an important role in the de novo pathway of purine nucleotide biosynthesis. Catalyzes the first committed step in the biosynthesis of AMP from IMP. The protein is Adenylosuccinate synthetase of Bradyrhizobium sp. (strain ORS 278).